Here is a 90-residue protein sequence, read N- to C-terminus: Small ribosomal subunit protein uS15c (90 aa).

The protein belongs to the universal ribosomal protein uS15 family. In terms of assembly, part of the 30S ribosomal subunit.

The protein localises to the plastid. The protein resides in the chloroplast. This is Small ribosomal subunit protein uS15c (rps15) from Lotus japonicus (Lotus corniculatus var. japonicus).